We begin with the raw amino-acid sequence, 445 residues long: MVEDKSQVKVKFFTREQDESLHVLDAPLFAPVSLKRYGLSEIINHLLGLAEPVPFDFLIDGQLLRCSLQDYLTRKGLSSEAVLNVEYTRAVLPPSYLKSFSNEDWVSALDVGAERIVSGSYDGVVRTWNLSGKIEKQYSGHTGAVRAVKFISSTRLVSGGNDRTLRLWKTKNDDVKHVDELEGTEEAHTLAILEGHQAPVVSVDVQGDRILSASYDNSIGFWSTNHKDMTAVDPMDSLGDKASSAAKKRRKLTMKDGSVRRRAPLSLLESHKAPVEQVIFASNDSTVAYSVSQDHTIKTWDLVTSRCVDTKSTSYSLLSMVELPKLRLLACGSSARHITLHDPRADSSAKITQQQLLGHKNFVVALDTCPENEYMLCSASHDGTVKVWDIRSSSSIYTITREDQSVEKGINDKVFAVKWAKGVGIISGGQDKKIQFNKGDNIFKN.

The segment at 8–89 is ubiquitin-like (UBL) domain; that stretch reads VKVKFFTREQ…EAVLNVEYTR (82 aa). Positions 99–445 are sufficient for interaction with ERB1 and association with 66S pre-ribosomes; it reads SFSNEDWVSA…FNKGDNIFKN (347 aa). 7 WD repeats span residues 101-138, 140-178, 195-232, 270-310, 312-351, 358-398, and 409-445; these read SNEDWVSALDVGAERIVSGSYDGVVRTWNLSGKIEKQY, GHTGAVRAVKFISSTRLVSGGNDRTLRLWKTKNDDVKHV, GHQAPVVSVDVQGDRILSASYDNSIGFWSTNHKDMTAV, SHKA…CVDT, STSYSLLSMVELPKLRLLACGSSARHITLHDPRADSSAKI, GHKN…SIYT, and GINDKVFAVKWAKGVGIISGGQDKKIQFNKGDNIFKN.

It belongs to the WD repeat WDR12/YTM1 family. As to quaternary structure, component of the NOP7 complex, composed of ERB1, NOP7 and YTM1. The complex is held together by ERB1, which interacts with NOP7 via its N-terminal domain and with YTM1 via a high-affinity interaction between the seven-bladed beta-propeller domains of the 2 proteins. The NOP7 complex associates with the 66S pre-ribosome. Interacts (via UBL domain) with MDN1 (via VWFA/MIDAS domain).

It localises to the nucleus. The protein resides in the nucleolus. Its subcellular location is the nucleoplasm. Functionally, component of the NOP7 complex, which is required for maturation of the 25S and 5.8S ribosomal RNAs and formation of the 60S ribosome. This chain is Ribosome biogenesis protein YTM1, found in Eremothecium gossypii (strain ATCC 10895 / CBS 109.51 / FGSC 9923 / NRRL Y-1056) (Yeast).